The chain runs to 447 residues: Adenylosuccinate synthetase (447 aa).

GTP contacts are provided by residues G12–K18 and G40–T42. The active-site Proton acceptor is D13. 2 residues coordinate Mg(2+): D13 and G40. IMP is bound by residues D13–K16, N38–H41, T128, R142, Q223, T238, and R302. The active-site Proton donor is H41. Residue T298–R304 participates in substrate binding. GTP contacts are provided by residues R304, K330–D332, and S412–G414.

This sequence belongs to the adenylosuccinate synthetase family. In terms of assembly, homodimer. Mg(2+) serves as cofactor.

The protein resides in the cytoplasm. It carries out the reaction IMP + L-aspartate + GTP = N(6)-(1,2-dicarboxyethyl)-AMP + GDP + phosphate + 2 H(+). The protein operates within purine metabolism; AMP biosynthesis via de novo pathway; AMP from IMP: step 1/2. Functionally, plays an important role in the de novo pathway of purine nucleotide biosynthesis. Catalyzes the first committed step in the biosynthesis of AMP from IMP. In Microcystis aeruginosa (strain NIES-843 / IAM M-2473), this protein is Adenylosuccinate synthetase.